The chain runs to 126 residues: Aspartate 1-decarboxylase (126 aa).

The active-site Schiff-base intermediate with substrate; via pyruvic acid is S25. A Pyruvic acid (Ser) modification is found at S25. Residue T57 coordinates substrate. The Proton donor role is filled by Y58. Residue G73 to A75 coordinates substrate.

This sequence belongs to the PanD family. In terms of assembly, heterooctamer of four alpha and four beta subunits. Requires pyruvate as cofactor. Post-translationally, is synthesized initially as an inactive proenzyme, which is activated by self-cleavage at a specific serine bond to produce a beta-subunit with a hydroxyl group at its C-terminus and an alpha-subunit with a pyruvoyl group at its N-terminus.

It localises to the cytoplasm. The catalysed reaction is L-aspartate + H(+) = beta-alanine + CO2. It participates in cofactor biosynthesis; (R)-pantothenate biosynthesis; beta-alanine from L-aspartate: step 1/1. In terms of biological role, catalyzes the pyruvoyl-dependent decarboxylation of aspartate to produce beta-alanine. The chain is Aspartate 1-decarboxylase from Acetivibrio thermocellus (strain ATCC 27405 / DSM 1237 / JCM 9322 / NBRC 103400 / NCIMB 10682 / NRRL B-4536 / VPI 7372) (Clostridium thermocellum).